A 419-amino-acid chain; its full sequence is Probable serine/threonine-protein kinase CST (419 aa).

G2 is lipidated: N-myristoyl glycine. A lipid anchor (S-palmitoyl cysteine) is attached at C4. The disordered stretch occupies residues 8–48 (FSSSSPSKTGLHSHATTNNHSNGTEFSSTTGATTNSSVGQQ). Residues 15 to 48 (KTGLHSHATTNNHSNGTEFSSTTGATTNSSVGQQ) show a composition bias toward polar residues. In terms of domain architecture, Protein kinase spans 86–368 (FKPDSMLGQG…KEVVEVLEHI (283 aa)). 92–100 (LGQGGFGKV) lines the ATP pocket. The residue at position 117 (S117) is a Phosphoserine. K124 serves as a coordination point for ATP. A Phosphotyrosine modification is found at Y169. D218 functions as the Proton acceptor in the catalytic mechanism. Position 222 is a phosphoserine (S222). Phosphothreonine occurs at positions 253 and 258. A Phosphotyrosine modification is found at Y266. The segment covering 378–390 (SSTKQAVANSSRS) has biased composition (polar residues). Positions 378–419 (SSTKQAVANSSRSSPHHYRYKAGALGAERKRATPGRFGSVEK) are disordered.

The protein belongs to the protein kinase superfamily. Ser/Thr protein kinase family. Interacts with SOBIR1/EVR and RLK5/HAE. Post-translationally, autophosphorylated on serine, threonine and tyrosine residues.

It is found in the cell membrane. Its subcellular location is the nucleus. It catalyses the reaction L-seryl-[protein] + ATP = O-phospho-L-seryl-[protein] + ADP + H(+). The enzyme catalyses L-threonyl-[protein] + ATP = O-phospho-L-threonyl-[protein] + ADP + H(+). Functionally, acts as a spatial inhibitor of signaling that modulates abscission zone cell adhesion and expansion. Acts both directly and indirectly by physically interacting with RLK5/HAE and SOBIR1/EVR at the cell surface. This chain is Probable serine/threonine-protein kinase CST, found in Arabidopsis thaliana (Mouse-ear cress).